We begin with the raw amino-acid sequence, 111 residues long: UPF0342 protein gbs1446 (111 aa).

This sequence belongs to the UPF0342 family.

The chain is UPF0342 protein gbs1446 from Streptococcus agalactiae serotype III (strain NEM316).